A 152-amino-acid polypeptide reads, in one-letter code: Ribosome maturation factor RimP (152 aa).

Belongs to the RimP family.

The protein resides in the cytoplasm. In terms of biological role, required for maturation of 30S ribosomal subunits. The sequence is that of Ribosome maturation factor RimP from Brevibacillus brevis (strain 47 / JCM 6285 / NBRC 100599).